The primary structure comprises 446 residues: Aspartokinase (446 aa).

Positions 250-294 (IPLVKSTYMEESALNTKHSTKIDIPEDASGSTYKLPIELALQNRY) constitute an RPE1 insert domain.

The protein belongs to the aspartokinase family.

It carries out the reaction L-aspartate + ATP = 4-phospho-L-aspartate + ADP. The protein operates within amino-acid biosynthesis; L-lysine biosynthesis via DAP pathway; (S)-tetrahydrodipicolinate from L-aspartate: step 1/4. Its pathway is amino-acid biosynthesis; L-methionine biosynthesis via de novo pathway; L-homoserine from L-aspartate: step 1/3. It participates in amino-acid biosynthesis; L-threonine biosynthesis; L-threonine from L-aspartate: step 1/5. The protein is Aspartokinase (lysC) of Rickettsia prowazekii (strain Madrid E).